An 83-amino-acid polypeptide reads, in one-letter code: Small ribosomal subunit protein uS17 (83 aa).

The protein belongs to the universal ribosomal protein uS17 family. In terms of assembly, part of the 30S ribosomal subunit.

Its function is as follows. One of the primary rRNA binding proteins, it binds specifically to the 5'-end of 16S ribosomal RNA. The chain is Small ribosomal subunit protein uS17 from Magnetococcus marinus (strain ATCC BAA-1437 / JCM 17883 / MC-1).